The chain runs to 203 residues: Dephospho-CoA kinase (203 aa).

One can recognise a DPCK domain in the interval 6–203 (ILGLTGGIGS…FYLTLRGGRA (198 aa)). Residue 14-19 (GSGKSA) participates in ATP binding.

It belongs to the CoaE family.

It localises to the cytoplasm. It catalyses the reaction 3'-dephospho-CoA + ATP = ADP + CoA + H(+). It functions in the pathway cofactor biosynthesis; coenzyme A biosynthesis; CoA from (R)-pantothenate: step 5/5. Catalyzes the phosphorylation of the 3'-hydroxyl group of dephosphocoenzyme A to form coenzyme A. This chain is Dephospho-CoA kinase, found in Pseudomonas aeruginosa (strain ATCC 15692 / DSM 22644 / CIP 104116 / JCM 14847 / LMG 12228 / 1C / PRS 101 / PAO1).